We begin with the raw amino-acid sequence, 736 residues long: Prolyl oligopeptidase dbiP (736 aa).

Active-site charge relay system residues include S572, D656, and H692.

It belongs to the peptidase S9A family. In terms of assembly, monomer.

The catalysed reaction is Hydrolysis of Pro-|-Xaa &gt;&gt; Ala-|-Xaa in oligopeptides.. It functions in the pathway mycotoxin biosynthesis. In terms of biological role, prolyl oligopeptidase; part of the gene cluster that mediates the biosynthesis of dendrothelin A, a highly methylated cyclic dodecapeptide showing slight nematodicidal activity. Excises and catalyzes the macrocyclization of the methylated core peptide of dbiMA to yield dendrothelin A. DbiP works in a two-step fashion with an initial cleavage at the N-terminus, followed by a second cleavage at the C-terminus of the core peptide. According to this mechanism, the free N-terminus of the core peptide, generated by the first cleavage, attacks the covalent intermediate of the second cleavage, which results in macrocyclization of the core peptide. The chain is Prolyl oligopeptidase dbiP from Dendrothele bispora (strain CBS 962.96).